The chain runs to 568 residues: 2-succinyl-5-enolpyruvyl-6-hydroxy-3-cyclohexene-1-carboxylate synthase (568 aa).

This sequence belongs to the TPP enzyme family. MenD subfamily. Homodimer. It depends on Mg(2+) as a cofactor. Requires Mn(2+) as cofactor. The cofactor is thiamine diphosphate.

It carries out the reaction isochorismate + 2-oxoglutarate + H(+) = 5-enolpyruvoyl-6-hydroxy-2-succinyl-cyclohex-3-ene-1-carboxylate + CO2. The protein operates within quinol/quinone metabolism; 1,4-dihydroxy-2-naphthoate biosynthesis; 1,4-dihydroxy-2-naphthoate from chorismate: step 2/7. It functions in the pathway quinol/quinone metabolism; menaquinone biosynthesis. Functionally, catalyzes the thiamine diphosphate-dependent decarboxylation of 2-oxoglutarate and the subsequent addition of the resulting succinic semialdehyde-thiamine pyrophosphate anion to isochorismate to yield 2-succinyl-5-enolpyruvyl-6-hydroxy-3-cyclohexene-1-carboxylate (SEPHCHC). In Haemophilus influenzae (strain ATCC 51907 / DSM 11121 / KW20 / Rd), this protein is 2-succinyl-5-enolpyruvyl-6-hydroxy-3-cyclohexene-1-carboxylate synthase.